The sequence spans 263 residues: Small ribosomal subunit protein uS3 (263 aa).

A KH type-2 domain is found at 39–107; that stretch reads VREYLKKKLK…PVHVNIEEIR (69 aa). The tract at residues 211 to 263 is disordered; the sequence is GELPPEAATPREEERRPRRAPRGDRPDGARTGRPGGRGRGPRKADAAPAPEGE. Positions 219–240 are enriched in basic and acidic residues; the sequence is TPREEERRPRRAPRGDRPDGAR.

It belongs to the universal ribosomal protein uS3 family. In terms of assembly, part of the 30S ribosomal subunit. Forms a tight complex with proteins S10 and S14.

In terms of biological role, binds the lower part of the 30S subunit head. Binds mRNA in the 70S ribosome, positioning it for translation. The polypeptide is Small ribosomal subunit protein uS3 (Bordetella pertussis (strain Tohama I / ATCC BAA-589 / NCTC 13251)).